The sequence spans 741 residues: Lamin-B receptor (741 aa).

The segment at 29–126 is disordered; the sequence is RLRRPRRTED…TGSGSGSSLP (98 aa). Low complexity-rich tracts occupy residues 57–84 and 109–126; these read TRRT…RTRA and PRSS…SSLP. Position 111 is a phosphoserine (Ser-111). Thr-135 is modified (phosphothreonine). Ser-144 is subject to Phosphoserine. Positions 160–184 are enriched in polar residues; it reads TNTSSGAPNKAFNTSSVNSGNSFSR. Residues 160–194 are disordered; the sequence is TNTSSGAPNKAFNTSSVNSGNSFSRTTTSSTTTTT. The span at 185-194 shows a compositional bias: low complexity; it reads TTTSSTTTTT. 2 positions are modified to phosphoserine: Ser-223 and Ser-225. Residues 231–240 show a composition bias toward polar residues; it reads LAGTPVTNTE. Positions 231–277 are disordered; that stretch reads LAGTPVTNTEEGSRYSRSVSRSVYDDEKSSKRSYSTGEEDIDEEDEL. A phosphothreonine mark is found at Thr-234 and Thr-237. 5 positions are modified to phosphoserine: Ser-243, Ser-246, Ser-248, Ser-250, and Ser-263. At Thr-266 the chain carries Phosphothreonine. Residues 267-277 are compositionally biased toward acidic residues; that stretch reads GEEDIDEEDEL. Residue Ser-284 is modified to Phosphoserine. At Thr-288 the chain carries Phosphothreonine. At Ser-291 the chain carries Phosphoserine. Thr-293 is subject to Phosphothreonine. Ser-298 carries the post-translational modification Phosphoserine. A run of 8 helical transmembrane segments spans residues 308 to 328, 363 to 383, 402 to 422, 429 to 449, 497 to 517, 543 to 563, 577 to 599, and 604 to 624; these read FGGW…VYYL, VVGA…LLPG, LTLL…VTFV, FCIF…WLVD, LSLV…LVWP, PATL…IIFE, YGCL…TKYF, and VPIS…LGLL. Phosphoserine occurs at positions 640 and 642. The chain crosses the membrane as a helical span at residues 687 to 707; sequence MALRPAWPPVLGLSLIILLLL.

This sequence belongs to the ERG4/ERG24 family. Interacts directly with LAM.

The protein resides in the nucleus inner membrane. Anchors the lamina and the heterochromatin to the inner nuclear membrane. This Drosophila melanogaster (Fruit fly) protein is Lamin-B receptor.